We begin with the raw amino-acid sequence, 210 residues long: Large ribosomal subunit protein bL25 (210 aa).

Residues 175–210 (IATILPPQQEEEIDSGEQQEAGQPDAAEGRETTPEE) are disordered. A compositionally biased stretch (basic and acidic residues) spans 201 to 210 (AEGRETTPEE).

This sequence belongs to the bacterial ribosomal protein bL25 family. CTC subfamily. As to quaternary structure, part of the 50S ribosomal subunit; part of the 5S rRNA/L5/L18/L25 subcomplex. Contacts the 5S rRNA. Binds to the 5S rRNA independently of L5 and L18.

Functionally, this is one of the proteins that binds to the 5S RNA in the ribosome where it forms part of the central protuberance. In Geobacillus kaustophilus (strain HTA426), this protein is Large ribosomal subunit protein bL25.